A 229-amino-acid chain; its full sequence is Potassium/proton antiporter CemA (229 aa).

The next 3 membrane-spanning stretches (helical) occupy residues 7–27, 106–126, and 189–209; these read FLPL…SLSF, MILH…YSIL, and IISG…KYWI.

It belongs to the CemA family.

It localises to the plastid. It is found in the chloroplast inner membrane. It catalyses the reaction K(+)(in) + H(+)(out) = K(+)(out) + H(+)(in). Contributes to K(+)/H(+) antiport activity by supporting proton efflux to control proton extrusion and homeostasis in chloroplasts in a light-dependent manner to modulate photosynthesis. Prevents excessive induction of non-photochemical quenching (NPQ) under continuous-light conditions. Indirectly promotes efficient inorganic carbon uptake into chloroplasts. The protein is Potassium/proton antiporter CemA of Eucalyptus globulus subsp. globulus (Tasmanian blue gum).